The following is a 228-amino-acid chain: CMRF-35-like molecule 4 (228 aa).

The first 24 residues, 1–24, serve as a signal peptide directing secretion; that stretch reads MIPRVIRLWLPSALFLSQVPGCVP. The region spanning 25–126 is the Ig-like V-type domain; it reads LHGPSTITGA…FDGSLGFDKY (102 aa). The Extracellular portion of the chain corresponds to 25-187; sequence LHGPSTITGA…QPRSLRSSLY (163 aa). Cysteine 43 and cysteine 110 form a disulfide bridge. A glycan (N-linked (GlcNAc...) asparagine) is linked at asparagine 90. The interval 139–174 is disordered; it reads PVTGSSLESGRDILESPTSSVGHTHPSVTTDDTIPA. The span at 154-170 shows a compositional bias: polar residues; it reads SPTSSVGHTHPSVTTDD. The helical transmembrane segment at 188 to 208 threads the bilayer; it reads FWVLVSLKLFLFLSMLGAVLW. The Cytoplasmic portion of the chain corresponds to 209-228; it reads VNRPQRCSGGSSSRPCYENQ.

The protein belongs to the CD300 family. In terms of assembly, interacts with TYROBP, HCST and FcR gamma. Present on the surface of mast cells, dendritic cells, peritoneal macrophages and a subset of B-cells (at protein level).

The protein localises to the cell membrane. Acts as an activating receptor in mast cells and macrophages. This Mus musculus (Mouse) protein is CMRF-35-like molecule 4.